The chain runs to 384 residues: Probable peptidoglycan glycosyltransferase FtsW (384 aa).

The Cytoplasmic portion of the chain corresponds to 1–19; the sequence is MAAVWRWFVPERPSFYDRG. A helical transmembrane segment spans residues 20–40; sequence LLALTFSLMGIGLMMVASASI. The Periplasmic segment spans residues 41–54; it reads KEGPGGDMFYFTKR. Residues 55 to 75 traverse the membrane as a helical segment; that stretch reads HLIFLFVCLGIGVGTLYLPLE. The Cytoplasmic segment spans residues 76 to 83; the sequence is RWREWSGR. Residues 84–104 traverse the membrane as a helical segment; sequence LLVGALGLLFAVLAVGRTVNG. At 105–110 the chain is on the periplasmic side; sequence AKRWIG. A helical membrane pass occupies residues 111–131; it reads FGFFNIQPAELAKLALIVFIA. Residues 132-143 lie on the Cytoplasmic side of the membrane; sequence SYLVRRSDEVRG. Residues 144–164 traverse the membrane as a helical segment; it reads NIAGFVKPLAVVFLLAIMLLA. The Periplasmic segment spans residues 165 to 166; the sequence is QP. The chain crosses the membrane as a helical span at residues 167–187; that stretch reads DLGSVVVLFVCTFGLLFIGGA. Position 188 (K188) is a topological domain, cytoplasmic. The helical transmembrane segment at 189–209 threads the bilayer; the sequence is LVQFIAIIVAGLSALAGLIIY. Over 210–267 the chain is Periplasmic; sequence EPYRLRRVTSFLDPWADPFGSGYQLTQSLMAFGRGGFFGQGLGNSVQKLSYLPEAHTD. A helical membrane pass occupies residues 268–288; sequence FVFAILGEELGYFGVLVVLFL. The Cytoplasmic portion of the chain corresponds to 289–316; sequence QLLLAMKALQIGRTALLRSKFFEGYMAC. A helical membrane pass occupies residues 317-337; it reads GIGIWFSFQTVVNVGAAAGML. Topologically, residues 338 to 343 are periplasmic; sequence PTKGLT. A helical membrane pass occupies residues 344–364; the sequence is LPLVSYGGSSLIAITMAVAIL. At 365–384 the chain is on the cytoplasmic side; sequence LRIDFERRLDTSHVIQREAA.

The protein belongs to the SEDS family. FtsW subfamily.

Its subcellular location is the cell inner membrane. It carries out the reaction [GlcNAc-(1-&gt;4)-Mur2Ac(oyl-L-Ala-gamma-D-Glu-L-Lys-D-Ala-D-Ala)](n)-di-trans,octa-cis-undecaprenyl diphosphate + beta-D-GlcNAc-(1-&gt;4)-Mur2Ac(oyl-L-Ala-gamma-D-Glu-L-Lys-D-Ala-D-Ala)-di-trans,octa-cis-undecaprenyl diphosphate = [GlcNAc-(1-&gt;4)-Mur2Ac(oyl-L-Ala-gamma-D-Glu-L-Lys-D-Ala-D-Ala)](n+1)-di-trans,octa-cis-undecaprenyl diphosphate + di-trans,octa-cis-undecaprenyl diphosphate + H(+). Its pathway is cell wall biogenesis; peptidoglycan biosynthesis. In terms of biological role, peptidoglycan polymerase that is essential for cell division. The protein is Probable peptidoglycan glycosyltransferase FtsW of Tolumonas auensis (strain DSM 9187 / NBRC 110442 / TA 4).